Here is a 117-residue protein sequence, read N- to C-terminus: ATP-dependent Clp protease adapter protein ClpS 1 (117 aa).

The interval 1 to 33 is disordered; sequence MIAMPVRMQQGSEGDGGGPSRGTSVITRTKPKT.

It belongs to the ClpS family. As to quaternary structure, binds to the N-terminal domain of the chaperone ClpA.

Its function is as follows. Involved in the modulation of the specificity of the ClpAP-mediated ATP-dependent protein degradation. This Rhizobium meliloti (strain 1021) (Ensifer meliloti) protein is ATP-dependent Clp protease adapter protein ClpS 1.